The sequence spans 555 residues: Potassium-transporting ATPase potassium-binding subunit (555 aa).

10 consecutive transmembrane segments (helical) span residues 2 to 22 (IWVA…PTGI), 60 to 80 (QYAL…YFIF), 130 to 150 (IGIT…VMAF), 173 to 193 (VFLP…VPQT), 246 to 266 (MSNI…PFTY), 278 to 298 (ILFV…TTSE), 374 to 394 (AGFV…GLMV), 412 to 432 (LIAV…ALAL), 483 to 503 (LVMF…AASL), and 525 to 545 (GIFI…MLVL).

This sequence belongs to the KdpA family. In terms of assembly, the system is composed of three essential subunits: KdpA, KdpB and KdpC.

The protein localises to the cell membrane. Functionally, part of the high-affinity ATP-driven potassium transport (or Kdp) system, which catalyzes the hydrolysis of ATP coupled with the electrogenic transport of potassium into the cytoplasm. This subunit binds the extracellular potassium ions and delivers the ions to the membrane domain of KdpB through an intramembrane tunnel. The chain is Potassium-transporting ATPase potassium-binding subunit from Bacillus cereus (strain G9842).